Consider the following 258-residue polypeptide: Trans-aconitate 2-methyltransferase (258 aa).

The protein belongs to the methyltransferase superfamily. Tam family.

Its subcellular location is the cytoplasm. It catalyses the reaction trans-aconitate + S-adenosyl-L-methionine = (E)-3-(methoxycarbonyl)pent-2-enedioate + S-adenosyl-L-homocysteine. Catalyzes the S-adenosylmethionine monomethyl esterification of trans-aconitate. The chain is Trans-aconitate 2-methyltransferase from Yersinia pseudotuberculosis serotype O:1b (strain IP 31758).